A 276-amino-acid polypeptide reads, in one-letter code: Transmembrane protein 45B (276 aa).

Helical transmembrane passes span 7 to 27 (HALPGSFFLIVGLWWSLKYPL), 48 to 68 (IIEAAIRTLFAVIGILVEQFV), 95 to 115 (LFFAVSGIMDMLTYLITHVPL), 147 to 167 (IHSLLLYTVFGGALSLAVEVV), 181 to 201 (LLLLQGTWFWQIGFVLFPPFG), and 213 to 233 (IMFVTMCFCWHYLAALCILAA). 2 positions are modified to phosphoserine: serine 271 and serine 273.

It belongs to the TMEM45 family.

Its subcellular location is the endosome membrane. It is found in the lysosome membrane. The protein resides in the golgi apparatus. The protein localises to the trans-Golgi network membrane. Its function is as follows. Plays a role in innate immunity. The sequence is that of Transmembrane protein 45B (TMEM45B) from Bos taurus (Bovine).